A 120-amino-acid polypeptide reads, in one-letter code: U-scoloptoxin(16)-Er2a (120 aa).

A signal peptide spans 1–26; it reads MNTVSVVQFLAVGCAVFVLYGRGVFA.

This sequence belongs to the scoloptoxin-16 family. Contains 4 disulfide bonds. In terms of tissue distribution, expressed by the venom gland.

It is found in the secreted. This chain is U-scoloptoxin(16)-Er2a, found in Ethmostigmus rubripes (Giant centipede).